Reading from the N-terminus, the 216-residue chain is Probable nicotinate-nucleotide adenylyltransferase (216 aa).

Belongs to the NadD family.

It catalyses the reaction nicotinate beta-D-ribonucleotide + ATP + H(+) = deamido-NAD(+) + diphosphate. Its pathway is cofactor biosynthesis; NAD(+) biosynthesis; deamido-NAD(+) from nicotinate D-ribonucleotide: step 1/1. Functionally, catalyzes the reversible adenylation of nicotinate mononucleotide (NaMN) to nicotinic acid adenine dinucleotide (NaAD). In Shewanella baltica (strain OS195), this protein is Probable nicotinate-nucleotide adenylyltransferase.